A 49-amino-acid chain; its full sequence is U6-myrmicitoxin-Mri1a (49 aa).

A signal peptide spans 1 to 27 (MNPKALCSFLLATFLLLTVTIMPSVHA). Residues 28-35 (NAEANADA) constitute a propeptide that is removed on maturation.

Post-translationally, contains 1 disulfide bond. Expressed by the venom gland.

It is found in the secreted. This is U6-myrmicitoxin-Mri1a from Manica rubida (European giant red ant).